A 514-amino-acid polypeptide reads, in one-letter code: tRNA-2-methylthio-N(6)-dimethylallyladenosine synthase (514 aa).

Positions 68–186 (RTFLIKTYGC…LPEILEEAYL (119 aa)) constitute an MTTase N-terminal domain. [4Fe-4S] cluster-binding residues include Cys77, Cys113, Cys147, Cys223, Cys227, and Cys230. The 231-residue stretch at 209–439 (REGSTKAWVN…NKKVGHYSEK (231 aa)) folds into the Radical SAM core domain. A TRAM domain is found at 442-505 (NQYEGKTVTV…QYSLNGTFKE (64 aa)).

The protein belongs to the methylthiotransferase family. MiaB subfamily. In terms of assembly, monomer. Requires [4Fe-4S] cluster as cofactor.

It localises to the cytoplasm. It catalyses the reaction N(6)-dimethylallyladenosine(37) in tRNA + (sulfur carrier)-SH + AH2 + 2 S-adenosyl-L-methionine = 2-methylsulfanyl-N(6)-dimethylallyladenosine(37) in tRNA + (sulfur carrier)-H + 5'-deoxyadenosine + L-methionine + A + S-adenosyl-L-homocysteine + 2 H(+). Its function is as follows. Catalyzes the methylthiolation of N6-(dimethylallyl)adenosine (i(6)A), leading to the formation of 2-methylthio-N6-(dimethylallyl)adenosine (ms(2)i(6)A) at position 37 in tRNAs that read codons beginning with uridine. This chain is tRNA-2-methylthio-N(6)-dimethylallyladenosine synthase, found in Staphylococcus haemolyticus (strain JCSC1435).